The following is a 329-amino-acid chain: Probable cell division protein WhiA (329 aa).

Positions Ser275–Gln308 form a DNA-binding region, H-T-H motif.

It belongs to the WhiA family.

Its function is as follows. Involved in cell division and chromosome segregation. In Streptomyces avermitilis (strain ATCC 31267 / DSM 46492 / JCM 5070 / NBRC 14893 / NCIMB 12804 / NRRL 8165 / MA-4680), this protein is Probable cell division protein WhiA.